A 200-amino-acid polypeptide reads, in one-letter code: TATA-box-binding protein 1 (200 aa).

At Thr2 the chain carries N-acetylthreonine. 2 consecutive repeat copies span residues 25–101 (LQNI…ARIV) and 115–192 (IQNI…YPVL).

The protein belongs to the TBP family. As to quaternary structure, belongs to the TFIID complex together with the TBP-associated factors (TAFs). Binds DNA as monomer. Interacts with TAF1 (via N-terminus). Interacts with MEE12/CCG1. Associates with PWP2 in the nucleus. Component of a nuclear protein complex containing at least TATA binding proteins (TBPs, e.g. TBP1 and TBP2) and ATX1.

It localises to the nucleus. General transcription factor that functions at the core of the DNA-binding multiprotein factor TFIID. Binding of TFIID to the TATA box is the initial transcriptional step of the pre-initiation complex (PIC), playing a role in the activation of eukaryotic genes transcribed by RNA polymerase II. This chain is TATA-box-binding protein 1, found in Arabidopsis thaliana (Mouse-ear cress).